Here is a 131-residue protein sequence, read N- to C-terminus: uncharacterized protein (131 aa).

This is an uncharacterized protein from Bacillus subtilis (strain 168).